A 105-amino-acid polypeptide reads, in one-letter code: Intermembrane phospholipid transport system binding protein MlaB (105 aa).

Residues 4-105 (WDLQKNNDKI…GLSDWIANFI (102 aa)) enclose the STAS domain.

In terms of assembly, the complex is composed of two ATP-binding proteins (MlaF), two transmembrane proteins (MlaE), two cytoplasmic solute-binding proteins (MlaB) and six periplasmic solute-binding proteins (MlaD).

The protein localises to the cytoplasm. Part of the ABC transporter complex MlaFEDB, which is involved in a phospholipid transport pathway that maintains lipid asymmetry in the outer membrane by retrograde trafficking of phospholipids from the outer membrane to the inner membrane. MlaB plays critical roles in both the assembly and activity of the complex. May act by modulating MlaF structure and stability. In Haemophilus influenzae (strain ATCC 51907 / DSM 11121 / KW20 / Rd), this protein is Intermembrane phospholipid transport system binding protein MlaB.